The following is a 1058-amino-acid chain: SMC5-SMC6 complex localization factor protein 1 (1058 aa).

BRCT domains follow at residues Met-12–Ala-77 and Gly-119–Leu-196. The segment at Pro-410–Ser-1058 is NSE5-like domain; mediates interaction with SLF2. 3 ANK repeats span residues Lys-806 to Val-836, Ala-840 to Leu-869, and Asp-874 to Leu-903. Residue Lys-931 forms a Glycyl lysine isopeptide (Lys-Gly) (interchain with G-Cter in SUMO2) linkage.

In terms of assembly, interacts (via N-terminus) with SLF2; this interaction links RAD18 to the SMC5-SMC6 complex. Interacts (via BRCT domains) with RAD18; this interaction occurs in a SLF2-independent manner. Interacts with SMC6. Interacts (via BRCT domains) with RAD18 (via C-terminus and phosphorylated form); this interaction is required for efficient repair of UV-induced DNA damage.

Its subcellular location is the nucleus. It is found in the cytoplasm. The protein localises to the cytoskeleton. It localises to the microtubule organizing center. The protein resides in the centrosome. Functionally, plays a role in the DNA damage response (DDR) pathway by regulating postreplication repair of UV-damaged DNA and genomic stability maintenance. The SLF1-SLF2 complex acts to link RAD18 with the SMC5-SMC6 complex at replication-coupled interstrand cross-links (ICL) and DNA double-strand breaks (DSBs) sites on chromatin during DNA repair in response to stalled replication forks. Promotes the recruitment of SLF2 and the SMC5-SMC6 complex to DNA lesions. The sequence is that of SMC5-SMC6 complex localization factor protein 1 from Homo sapiens (Human).